The primary structure comprises 286 residues: Eukaryotic translation initiation factor 3 subunit F-2 (286 aa).

Residues 11-147 form the MPN domain; it reads ILLQPLVLLH…MRLYTAVVMG (137 aa).

Belongs to the eIF-3 subunit F family. As to quaternary structure, component of the eukaryotic translation initiation factor 3 (eIF-3) complex. The eIF-3 complex interacts with pix.

The protein resides in the cytoplasm. Functionally, component of the eukaryotic translation initiation factor 3 (eIF-3) complex, which is involved in protein synthesis of a specialized repertoire of mRNAs and, together with other initiation factors, stimulates binding of mRNA and methionyl-tRNAi to the 40S ribosome. The eIF-3 complex specifically targets and initiates translation of a subset of mRNAs involved in cell proliferation. This is Eukaryotic translation initiation factor 3 subunit F-2 from Drosophila willistoni (Fruit fly).